We begin with the raw amino-acid sequence, 990 residues long: DNA polymerase (990 aa).

Residues 936-976 form a disordered region; the sequence is PSDDAARKRARAGPSALRKQKAASNDEDSSDEDDEDCSQAI. The segment covering 960–972 has biased composition (acidic residues); that stretch reads NDEDSSDEDDEDC.

It belongs to the DNA polymerase type-B family.

It carries out the reaction DNA(n) + a 2'-deoxyribonucleoside 5'-triphosphate = DNA(n+1) + diphosphate. Functionally, replicates the viral genome, host DNA polymerases cannot substitute for the viral enzyme in this process. In Choristoneura fumiferana (Spruce budworm moth), this protein is DNA polymerase (POL).